The sequence spans 115 residues: U31-theraphotoxin-Cg1a (115 aa).

An N-terminal signal peptide occupies residues 1-18 (MKLCVIIIASLMVASVSG). A propeptide spanning residues 19 to 51 (RLRKIKGTELDKKMLLEKLGHGMDIRFEETPRA) is cleaved from the precursor. Cystine bridges form between Cys-52-Cys-67, Cys-60-Cys-73, Cys-64-Cys-113, and Cys-66-Cys-86.

This sequence belongs to the neurotoxin 03 (Tx2) family. 02 subfamily. In terms of tissue distribution, expressed by the venom gland.

The protein localises to the secreted. Its function is as follows. Probable ion channel inhibitor. The protein is U31-theraphotoxin-Cg1a of Chilobrachys guangxiensis (Chinese earth tiger tarantula).